A 1129-amino-acid polypeptide reads, in one-letter code: A-kinase anchor protein 11 (1129 aa).

Over residues 1-12 (MQKMQCHLRRPL) the composition is skewed to basic residues. The segment at 1 to 21 (MQKMQCHLRRPLHSSSSFSSQ) is disordered. 2 positions are modified to phosphothreonine: T251 and T363. Disordered regions lie at residues 354-376 (IRDRNVIPDTPPSTPLVPSQTSS), 394-416 (EFAPATPPSTPHNSSVGSLSENE), and 434-455 (SEEVESSEGEEHPEMDVKSEHS). Polar residues predominate over residues 404–416 (PHNSSVGSLSENE). A phosphoserine mark is found at S434, S439, and S440. Residues 442 to 455 (GEEHPEMDVKSEHS) are compositionally biased toward basic and acidic residues. Phosphoserine is present on S595. T742 is modified (phosphothreonine). S835 bears the Phosphoserine mark. Positions 905 to 918 (LAEKIVAEAIEKAE) are PKA-RII binding region. The tract at residues 962–1061 (SKEVEDFQST…QEDGAEGLQP (100 aa)) is disordered. Over residues 968–995 (FQSTESLGSQQMNLSVGEDSTGSWSNLS) the composition is skewed to polar residues. A compositionally biased stretch (basic and acidic residues) spans 1002-1011 (DESSSFHHLS). Low complexity predominate over residues 1012 to 1028 (ESSNGNSSSWSSLGLEG). Positions 1033–1042 (NNLSFPTSDS) are enriched in polar residues. The segment covering 1043–1056 (DGPDDRESEQEDGA) has biased composition (acidic residues).

Expressed in brain and testis.

It localises to the peroxisome. Binds to type II regulatory subunits of protein kinase A and anchors/targets them. This Rattus norvegicus (Rat) protein is A-kinase anchor protein 11 (Akap11).